Here is a 286-residue protein sequence, read N- to C-terminus: MKKHKIGIYEKALPKNITWQERLSLAKACGFEFIEMSIDESNDRLSRLNWTKSERIALHQSIIQSGITIPSMCLSAHRRFPFGSKDKKIRQKSFEIMEKAIDLSVNLGIRTIQLAGYDVYYEKQDEETIKYFQEGIEFAVTLAASAQVTLAVEIMDTPFMSSISRWKKWDTIINSPWFTVYPDIGNLSAWNNNIEEELTLGIDKISAIHLKDTYPVTETSKGQFRDVPFGQGCVDFVHFFSLLKKLNYRGAFLIEMWTEKNEEPLLEIIQARKWIVQQMEKAGLLC.

The protein belongs to the L-ribulose-5-phosphate 3-epimerase family.

The catalysed reaction is L-ribulose 5-phosphate = L-xylulose 5-phosphate. Functionally, catalyzes the isomerization of L-xylulose-5-phosphate to L-ribulose-5-phosphate. The polypeptide is Putative L-ribulose-5-phosphate 3-epimerase SgbU (sgbU) (Haemophilus influenzae (strain ATCC 51907 / DSM 11121 / KW20 / Rd)).